Consider the following 105-residue polypeptide: Nitrogen fixation nifHD2 region GlnB-like protein 1 (105 aa).

This sequence belongs to the P(II) protein family.

In terms of biological role, could be involved in the regulation of nitrogen fixation. The sequence is that of Nitrogen fixation nifHD2 region GlnB-like protein 1 from Methanosarcina barkeri.